Here is a 397-residue protein sequence, read N- to C-terminus: Leucine carboxyl methyltransferase 1 (397 aa).

Positions 17–61 are disordered; the sequence is AIQTPPPTDPNAAPAHRPAPRPALGRCRPPHRRRRRLRPPVRPPL. Residues 26–43 are compositionally biased toward low complexity; that stretch reads PNAAPAHRPAPRPALGRC. Over residues 44 to 55 the composition is skewed to basic residues; it reads RPPHRRRRRLRP. Residues arginine 119, glycine 142, aspartate 168, 224–225, and glutamate 259 contribute to the S-adenosyl-L-methionine site; that span reads DL.

The protein belongs to the methyltransferase superfamily. LCMT family.

It catalyses the reaction [phosphatase 2A protein]-C-terminal L-leucine + S-adenosyl-L-methionine = [phosphatase 2A protein]-C-terminal L-leucine methyl ester + S-adenosyl-L-homocysteine. Functionally, methylates the carboxyl group of the C-terminal leucine residue of protein phosphatase 2A catalytic subunits to form alpha-leucine ester residues. The sequence is that of Leucine carboxyl methyltransferase 1 (PPM1) from Cryptococcus neoformans var. neoformans serotype D (strain B-3501A) (Filobasidiella neoformans).